Consider the following 449-residue polypeptide: 3-phosphoshikimate 1-carboxyvinyltransferase (449 aa).

The disordered stretch occupies residues 1–29; it reads MSHDSVPSPITARAGTPLRGRLRPPGDKS. 3 residues coordinate 3-phosphoshikimate: lysine 28, serine 29, and arginine 33. Lysine 28 contributes to the phosphoenolpyruvate binding site. Phosphoenolpyruvate is bound by residues glycine 101 and arginine 129. Positions 175, 177, 330, and 357 each coordinate 3-phosphoshikimate. A phosphoenolpyruvate-binding site is contributed by glutamine 177. Aspartate 330 (proton acceptor) is an active-site residue. Phosphoenolpyruvate contacts are provided by arginine 361 and arginine 405.

The protein belongs to the EPSP synthase family. Monomer.

Its subcellular location is the cytoplasm. It carries out the reaction 3-phosphoshikimate + phosphoenolpyruvate = 5-O-(1-carboxyvinyl)-3-phosphoshikimate + phosphate. The protein operates within metabolic intermediate biosynthesis; chorismate biosynthesis; chorismate from D-erythrose 4-phosphate and phosphoenolpyruvate: step 6/7. Catalyzes the transfer of the enolpyruvyl moiety of phosphoenolpyruvate (PEP) to the 5-hydroxyl of shikimate-3-phosphate (S3P) to produce enolpyruvyl shikimate-3-phosphate and inorganic phosphate. This is 3-phosphoshikimate 1-carboxyvinyltransferase from Methylobacterium sp. (strain 4-46).